We begin with the raw amino-acid sequence, 249 residues long: MADS-box transcription factor 18 (249 aa).

The region spanning 1–61 is the MADS-box domain; that stretch reads MGRGPVQLRR…GKLYEFSSHS (61 aa). In terms of domain architecture, K-box spans 88 to 179; the sequence is QENWGDEYGI…KLMETEKEKN (92 aa). The tract at residues 184 to 249 is disordered; sequence NTNREEQNGA…PPWMLRTSHT (66 aa). A compositionally biased stretch (polar residues) spans 210–236; it reads PTTNNSQSQPRGSGESEAQPSPAQAGN.

In terms of tissue distribution, widely expressed. Transcripts accumulate to higher levels in organs that retain meristematic characteristics: in the apical meristem and in the meristematic leaf primordia formed on its flank; in the developing panicle at the early stage of rachis-branch primordia differentiation; in the procambium of the rachis branches and in all floral organ primordia.

It is found in the nucleus. In terms of biological role, probable transcription factor. The chain is MADS-box transcription factor 18 (MADS18) from Oryza sativa subsp. indica (Rice).